We begin with the raw amino-acid sequence, 259 residues long: Thiazole synthase (259 aa).

The Schiff-base intermediate with DXP role is filled by lysine 95. Residues glycine 156, alanine 183–glycine 184, and asparagine 205–serine 206 contribute to the 1-deoxy-D-xylulose 5-phosphate site.

Belongs to the ThiG family. Homotetramer. Forms heterodimers with either ThiH or ThiS.

Its subcellular location is the cytoplasm. It catalyses the reaction [ThiS sulfur-carrier protein]-C-terminal-Gly-aminoethanethioate + 2-iminoacetate + 1-deoxy-D-xylulose 5-phosphate = [ThiS sulfur-carrier protein]-C-terminal Gly-Gly + 2-[(2R,5Z)-2-carboxy-4-methylthiazol-5(2H)-ylidene]ethyl phosphate + 2 H2O + H(+). The protein operates within cofactor biosynthesis; thiamine diphosphate biosynthesis. Functionally, catalyzes the rearrangement of 1-deoxy-D-xylulose 5-phosphate (DXP) to produce the thiazole phosphate moiety of thiamine. Sulfur is provided by the thiocarboxylate moiety of the carrier protein ThiS. In vitro, sulfur can be provided by H(2)S. This is Thiazole synthase from Coxiella burnetii (strain CbuK_Q154) (Coxiella burnetii (strain Q154)).